Reading from the N-terminus, the 215-residue chain is MKRSRKFSSSTTTTTVIHTFYNDHTTPPATKEIPIETPLPATKANVKTNATAAAARIQSGYRSYRIRNLYKKISSINREANRVQSIIQRQETVDAIRSDEKERLRMNETLMALLLKLDSVPGLDPTIREARRKVSRKIVGMQEILDSISETKDEIQWWNYNDLGGVDSGQGGGAWPLYWEEAVEEEMCRERGGEEMERFCAQYLGFRCFQRFLRE.

A mitochondrion-targeting transit peptide spans M1–T14. The IQ domain maps to A50 to E79. The BAG domain occupies K72 to S149.

Binds to the ATPase domain of HSP70/HSC70 chaperones. Interacts with HSP70-1.

The protein localises to the mitochondrion. Its function is as follows. Co-chaperone that regulates diverse cellular pathways, such as programmed cell death and stress responses. This chain is BAG family molecular chaperone regulator 5, mitochondrial (BAG5), found in Arabidopsis thaliana (Mouse-ear cress).